Reading from the N-terminus, the 61-residue chain is Metallothionein-I, hippocampal (61 aa).

Position 1 is an N-acetylmethionine (Met-1). The interval 1 to 29 is beta; it reads MDPNCSCATGDSCACASTCKCKECKCTSC. 18 residues coordinate a divalent metal cation: Cys-5, Cys-7, Cys-13, Cys-15, Cys-19, Cys-21, Cys-24, Cys-26, Cys-29, Cys-33, Cys-34, Cys-36, Cys-37, Cys-41, Cys-44, Cys-48, Cys-50, and Cys-57. Residues 30–61 form an alpha region; sequence KKSCCSCCPVGCAKCAQGCICKGASDKCSCCA. A Phosphoserine modification is found at Ser-58. Cys-59 and Cys-60 together coordinate a divalent metal cation.

This sequence belongs to the metallothionein superfamily. Type 1 family.

In terms of biological role, metallothioneins have a high content of cysteine residues that bind various heavy metals; these proteins are transcriptionally regulated by both heavy metals and glucocorticoids. This isoform may play a role in regulating the transport, accumulation, and compartmentation of zinc in the hippocampus. In Bos taurus (Bovine), this protein is Metallothionein-I, hippocampal.